Reading from the N-terminus, the 859-residue chain is Volume-regulated anion channel subunit LRRC8D (859 aa).

Residues 1-22 (MFTLAEVASLNDIQPTYRILKP) are Cytoplasmic-facing. The chain crosses the membrane as a helical span at residues 23–48 (WWDVFMDYLAVVMLMVAIFAGTMQLT). Over 49 to 164 (KDQVVCLPVL…YHLALPWYSK (116 aa)) the chain is Extracellular. The cysteines at positions 54 and 355 are disulfide-linked. The interval 110-138 (IPLQATHPHAESTLPNQEAKKEKRDPTGR) is disordered. A compositionally biased stretch (basic and acidic residues) spans 127–138 (EAKKEKRDPTGR). The chain crosses the membrane as a helical span at residues 165–183 (YFPYLALIHTIILMVSSNF). The Cytoplasmic portion of the chain corresponds to 184–309 (WFKYPKTCSK…EDSDLIYKLY (126 aa)). The tract at residues 222 to 252 (SEENKQRITGAQTLPKHVSTSSDEGSPSAST) is disordered. A compositionally biased stretch (polar residues) spans 228–252 (RITGAQTLPKHVSTSSDEGSPSAST). Ser242, Ser243, and Ser247 each carry phosphoserine. The helical transmembrane segment at 310-331 (VVQTLIKTAKFIFILCYTANFV) threads the bilayer. Topologically, residues 332–361 (NAISFEHVCKPKVEHLTGYEVFECTHNMAY) are extracellular. The chain crosses the membrane as a helical span at residues 362–387 (MLKKLLISYISIICVYGFICLYTLFW). The Cytoplasmic portion of the chain corresponds to 388 to 859 (LFRIPLKEYS…DVNVPFANGI (472 aa)). LRR repeat units follow at residues 515 to 535 (NLQELHLCHCPAKVEQTAFSF), 539 to 560 (HLRCLHVKFTDVAEIPAWVYLL), 562 to 583 (NLRELYLIGNLNSENNKMIGLE), 590 to 610 (HLKILHVKSNLTKVPSNITDV), 613 to 633 (HLTKLVIHNDGTKLLVLNSLK), 637 to 658 (NVAELELQNCELERIPHAIFSL), 660 to 681 (NLQELDLKSNNIRTIEEIISFQ), 685 to 706 (RLTCLKLWHNKIVAIPPSITHV), 708 to 729 (NLESLYFSNNKLESLPTAVFSL), 731 to 752 (KLRCLDVSYNNISTIPIEIGLL), 754 to 775 (NLQHLHITGNKVDILPKQLFKC), 777 to 798 (KLRTLNLGQNCIASLPEKISQL), and 800 to 821 (QLTQLELKGNCLDRLPAQLGQC).

This sequence belongs to the LRRC8 family. As to quaternary structure, heterohexamer; oligomerizes with other LRRC8 proteins (LRRC8A, LRRC8B, LRRC8C and/or LRRC8E) to form a heterohexamer. In vivo, the subunit composition may depend primarily on expression levels, and heterooligomeric channels containing various proportions of the different LRRC8 proteins may coexist. Expressed in pancreatic beta cells. Also expressed in glucagon-secreting pancreatic alpha cells.

The protein resides in the cell membrane. The protein localises to the endoplasmic reticulum membrane. It catalyses the reaction chloride(in) = chloride(out). The enzyme catalyses iodide(out) = iodide(in). It carries out the reaction taurine(out) = taurine(in). Its function is as follows. Non-essential component of the volume-regulated anion channel (VRAC, also named VSOAC channel), an anion channel required to maintain a constant cell volume in response to extracellular or intracellular osmotic changes. The VRAC channel conducts iodide better than chloride and can also conduct organic osmolytes like taurine. Plays a redundant role in the efflux of amino acids, such as aspartate, in response to osmotic stress family member (LRRC8B, LRRC8C, LRRC8D or LRRC8E); channel characteristics depend on the precise subunit composition. Also acts as a regulator of glucose-sensing in pancreatic beta cells: VRAC currents, generated in response to hypotonicity- or glucose-induced beta cell swelling, depolarize cells, thereby causing electrical excitation, leading to increase glucose sensitivity and insulin secretion. VRAC channels containing LRRC8D inhibit transport of immunoreactive cyclic dinucleotide GMP-AMP (2'-3'-cGAMP), an immune messenger produced in response to DNA virus in the cytosol. In Mus musculus (Mouse), this protein is Volume-regulated anion channel subunit LRRC8D.